The chain runs to 113 residues: Sporulation membrane protein YtrH (113 aa).

The next 3 membrane-spanning stretches (helical) occupy residues 16 to 36 (FIAL…AYLA), 51 to 71 (LKIW…YSFE), and 86 to 106 (LLLI…ISWL).

It localises to the forespore outer membrane. Functionally, involved in sporulation. May contribute to cortex formation or stability. The sequence is that of Sporulation membrane protein YtrH (ytrH) from Bacillus subtilis (strain 168).